Reading from the N-terminus, the 250-residue chain is 23S rRNA (guanosine-2'-O-)-methyltransferase RlmB (250 aa).

S-adenosyl-L-methionine contacts are provided by Gly-198, Ile-218, and Leu-227.

Belongs to the class IV-like SAM-binding methyltransferase superfamily. RNA methyltransferase TrmH family. RlmB subfamily.

Its subcellular location is the cytoplasm. The catalysed reaction is guanosine(2251) in 23S rRNA + S-adenosyl-L-methionine = 2'-O-methylguanosine(2251) in 23S rRNA + S-adenosyl-L-homocysteine + H(+). Specifically methylates the ribose of guanosine 2251 in 23S rRNA. The chain is 23S rRNA (guanosine-2'-O-)-methyltransferase RlmB from Coxiella burnetii (strain RSA 493 / Nine Mile phase I).